A 997-amino-acid chain; its full sequence is mRNA 3'-end-processing protein RNA14 (997 aa).

Residues 1-152 (MASEGTSWGA…THAPVPPAVP (152 aa)) are disordered. The segment covering 32 to 44 (HDSLASGDADAAD) has biased composition (low complexity). Residues 46–56 (GTEDDGGEYDP) are compositionally biased toward acidic residues. Residues 72–82 (SSGTQRQTSKP) show a composition bias toward polar residues. The segment covering 92–111 (ASDDEDEDEDEDEDEDEDEQ) has biased composition (acidic residues). The span at 116–133 (VPQTDAVSTQNHPGPSTT) shows a compositional bias: polar residues. 6 HAT repeats span residues 194-226 (SPLE…LELK), 228-259 (NNFV…YIRR), 270-305 (QARR…FVKN), 319-352 (QKMD…FEMG), 389-422 (TNLP…WEKE), and 434-466 (AYNQ…WCFQ). The disordered stretch occupies residues 549–579 (LKQAAAQDPVQTSIEENDDDEDNTPKRSPTE). One copy of the HAT 7 repeat lies at 654–686 (YKDPVGAKIFERGARLFPNDEMFMIEYLKYLHS). 2 disordered regions span residues 792–854 (QQSI…RRLD) and 907–997 (KAAG…GYRY).

The protein resides in the nucleus. Its subcellular location is the cytoplasm. In terms of biological role, component of the cleavage factor IA (CFIA) complex, which is involved in the endonucleolytic cleavage during polyadenylation-dependent pre-mRNA 3'-end formation. In Gibberella zeae (strain ATCC MYA-4620 / CBS 123657 / FGSC 9075 / NRRL 31084 / PH-1) (Wheat head blight fungus), this protein is mRNA 3'-end-processing protein RNA14 (RNA14).